A 219-amino-acid chain; its full sequence is Probable octanoyltransferase (219 aa).

One can recognise a BPL/LPL catalytic domain in the interval 43 to 219 (QPPKPTIITS…NNLDSFLMSK (177 aa)). Substrate is bound by residues 83–90 (RGGQTTFH), 151–153 (AIG), and 164–166 (GLA). Cys182 serves as the catalytic Acyl-thioester intermediate.

Belongs to the LipB family.

The enzyme catalyses octanoyl-[ACP] + L-lysyl-[protein] = N(6)-octanoyl-L-lysyl-[protein] + holo-[ACP] + H(+). Its pathway is protein modification; protein lipoylation via endogenous pathway; protein N(6)-(lipoyl)lysine from octanoyl-[acyl-carrier-protein]: step 1/2. In terms of biological role, catalyzes the transfer of endogenously produced octanoic acid from octanoyl-acyl-carrier-protein onto the lipoyl domains of lipoate-dependent enzymes. Lipoyl-ACP can also act as a substrate although octanoyl-ACP is likely to be the physiological substrate. This chain is Probable octanoyltransferase, found in Schizosaccharomyces pombe (strain 972 / ATCC 24843) (Fission yeast).